The sequence spans 286 residues: Putative 2-aminoethylphosphonate transport system permease protein PhnU (286 aa).

The next 6 helical transmembrane spans lie at 19 to 39 (WLLL…SLIV), 76 to 96 (FFAT…LVFI), 111 to 131 (FIAL…GSAG), 150 to 170 (FLYS…PLVM), 202 to 222 (VIFP…LLLT), and 254 to 274 (YTVA…LFSL). The region spanning 68–275 (LLNTLQIAFF…VLSLGLFSLY (208 aa)) is the ABC transmembrane type-1 domain.

This sequence belongs to the binding-protein-dependent transport system permease family.

The protein resides in the cell inner membrane. Probably part of the PhnSTUV complex (TC 3.A.1.11.5) involved in 2-aminoethylphosphonate import. Probably responsible for the translocation of the substrate across the membrane. The chain is Putative 2-aminoethylphosphonate transport system permease protein PhnU (phnU) from Salmonella typhimurium (strain LT2 / SGSC1412 / ATCC 700720).